The following is a 520-amino-acid chain: GMP synthase [glutamine-hydrolyzing] (520 aa).

Residues 13–205 (KIIVLDYGSQ…ALNICKAKGD (193 aa)) enclose the Glutamine amidotransferase type-1 domain. Catalysis depends on Cys90, which acts as the Nucleophile. Active-site residues include His179 and Glu181. In terms of domain architecture, GMPS ATP-PPase spans 206–395 (WSMDNFIDMQ…LGMPDHIVWR (190 aa)). 233-239 (SGGVDSS) provides a ligand contact to ATP.

As to quaternary structure, homodimer.

The enzyme catalyses XMP + L-glutamine + ATP + H2O = GMP + L-glutamate + AMP + diphosphate + 2 H(+). It participates in purine metabolism; GMP biosynthesis; GMP from XMP (L-Gln route): step 1/1. Its function is as follows. Catalyzes the synthesis of GMP from XMP. The protein is GMP synthase [glutamine-hydrolyzing] of Streptococcus pneumoniae (strain P1031).